A 142-amino-acid polypeptide reads, in one-letter code: Large ribosomal subunit protein uL13 (142 aa).

This sequence belongs to the universal ribosomal protein uL13 family. In terms of assembly, part of the 50S ribosomal subunit.

Its function is as follows. This protein is one of the early assembly proteins of the 50S ribosomal subunit, although it is not seen to bind rRNA by itself. It is important during the early stages of 50S assembly. In Treponema pallidum (strain Nichols), this protein is Large ribosomal subunit protein uL13.